A 116-amino-acid polypeptide reads, in one-letter code: Iron-sulfur cluster insertion protein ErpA (116 aa).

Residues C44, C108, and C110 each contribute to the iron-sulfur cluster site.

It belongs to the HesB/IscA family. In terms of assembly, homodimer. It depends on iron-sulfur cluster as a cofactor.

In terms of biological role, required for insertion of 4Fe-4S clusters for at least IspG. This is Iron-sulfur cluster insertion protein ErpA from Aeromonas salmonicida (strain A449).